Here is a 358-residue protein sequence, read N- to C-terminus: Probable translocation protein Y4yK (358 aa).

It belongs to the FliN/MopA/SpaO family.

Its function is as follows. Could be involved in the secretion of an unknown factor. This Sinorhizobium fredii (strain NBRC 101917 / NGR234) protein is Probable translocation protein Y4yK.